The primary structure comprises 501 residues: L-arabinose isomerase (501 aa).

E306, E333, H350, and H450 together coordinate Mn(2+).

The protein belongs to the arabinose isomerase family. As to quaternary structure, homohexamer. Mn(2+) serves as cofactor.

It catalyses the reaction beta-L-arabinopyranose = L-ribulose. It functions in the pathway carbohydrate degradation; L-arabinose degradation via L-ribulose; D-xylulose 5-phosphate from L-arabinose (bacterial route): step 1/3. Catalyzes the conversion of L-arabinose to L-ribulose. This is L-arabinose isomerase from Erwinia tasmaniensis (strain DSM 17950 / CFBP 7177 / CIP 109463 / NCPPB 4357 / Et1/99).